We begin with the raw amino-acid sequence, 215 residues long: ATP-dependent dethiobiotin synthetase BioD (215 aa).

13-18 (DIGKTI) is an ATP binding site. Thr17 lines the Mg(2+) pocket. Lys38 is a catalytic residue. Thr42 is a substrate binding site. ATP is bound by residues Asp50, 115–118 (EGAG), and 175–176 (NH). Mg(2+)-binding residues include Asp50 and Glu115.

It belongs to the dethiobiotin synthetase family. Homodimer. Requires Mg(2+) as cofactor.

It is found in the cytoplasm. It carries out the reaction (7R,8S)-7,8-diammoniononanoate + CO2 + ATP = (4R,5S)-dethiobiotin + ADP + phosphate + 3 H(+). The protein operates within cofactor biosynthesis; biotin biosynthesis; biotin from 7,8-diaminononanoate: step 1/2. Functionally, catalyzes a mechanistically unusual reaction, the ATP-dependent insertion of CO2 between the N7 and N8 nitrogen atoms of 7,8-diaminopelargonic acid (DAPA, also called 7,8-diammoniononanoate) to form a ureido ring. The sequence is that of ATP-dependent dethiobiotin synthetase BioD from Neisseria meningitidis serogroup A / serotype 4A (strain DSM 15465 / Z2491).